A 137-amino-acid polypeptide reads, in one-letter code: MSEALKILNNIRTLRAQARECTLETLEEMLEKLEVVVNERREEESAAAAEVEERTRKLQQYREMLIADGIDPNELLNSMAAAKSGTKAKRAARPAKYSYVDENGETKTWTGQGRTPAVIKKAMEEQGKQLEDFLIKE.

A coiled-coil region spans residues 13-65 (TLRAQARECTLETLEEMLEKLEVVVNERREEESAAAAEVEERTRKLQQYREML). The DNA-binding element occupies 112-117 (QGRTPA).

This sequence belongs to the histone-like protein H-NS family. Homodimer that oligomerizes on DNA into higher-order complexes that form bridges between disparate regions of DNA compacting it. Interacts with Hha, YdgT and StpA.

The protein localises to the cytoplasm. It is found in the nucleoid. Its function is as follows. A DNA-binding protein implicated in transcriptional repression and chromosome organization and compaction. Binds AT-rich DNA, repressing its transcription; about 754/4438 tested genes (15%) bind to H-NS, 70% of these are AT-rich and correspond to horizontally transferred geness (HTG), thus playing a central role in silencing foreign genes. This offers the selective advantage of silencing foreign DNA. Binds nucleation sites in AT-rich DNA and bridges them, forming higher-order nucleoprotein complexes and condensing the chromosome. A subset of genes are repressed by H-NS in association with Hha and/or YdgT. This is DNA-binding protein H-NS (hns) from Salmonella typhimurium (strain 14028s / SGSC 2262).